The following is a 750-amino-acid chain: Phosphate transporter PHO1 homolog 7 (750 aa).

Residues Met-1–Glu-298 form the SPX domain. The Cytoplasmic portion of the chain corresponds to Met-1–Thr-350. Residues Phe-351–Ile-371 form a helical membrane-spanning segment. Residues His-372 to Pro-391 are Extracellular-facing. The helical transmembrane segment at Leu-392–Phe-412 threads the bilayer. Topologically, residues Trp-413–Arg-435 are cytoplasmic. The helical transmembrane segment at His-436–Leu-456 threads the bilayer. The Extracellular segment spans residues Asp-457–Glu-472. A helical membrane pass occupies residues Leu-473 to Phe-493. The Cytoplasmic portion of the chain corresponds to Tyr-494–Lys-622. The EXS domain maps to Arg-557–Ser-750. Residues Ile-623 to Phe-643 traverse the membrane as a helical segment. Residues Asp-644–Ala-666 are Extracellular-facing. Residues Val-667–Leu-687 form a helical membrane-spanning segment. At Asp-688–Ser-750 the chain is on the cytoplasmic side.

Belongs to the SYG1 (TC 2.A.94) family. In terms of tissue distribution, expressed in root tips, vascular cylinders of roots and filaments, leaf hydathodes, stem, receptacle and stigma apex.

It is found in the cell membrane. May transport inorganic phosphate (Pi). This chain is Phosphate transporter PHO1 homolog 7 (PHO1-H7), found in Arabidopsis thaliana (Mouse-ear cress).